The following is a 188-amino-acid chain: HGPRTase-like protein (188 aa).

The protein belongs to the purine/pyrimidine phosphoribosyltransferase family. Archaeal HPRT subfamily.

May catalyze a purine salvage reaction, the substrate is unknown. The protein is HGPRTase-like protein of Halobacterium salinarum (strain ATCC 29341 / DSM 671 / R1).